A 187-amino-acid chain; its full sequence is MKSTKRNTFFGLAALGALGLGYSVYKSFITSDKPSSLINLGINQERKSYTRQKVAIIVSESILAIQLPIQEILKNTKDVVFVLAPTIAKDEFLRENEVDSGLSFKVIETGTAIGCFHVLKHIKATYNIFNLHDFLPSSTKTSSDNEQLTFDLEEYVNLHLNNFLQNVVELPSDSTSIQETVNQYIYN.

The helical transmembrane segment at 7–29 (NTFFGLAALGALGLGYSVYKSFI) threads the bilayer.

Belongs to the peroxin-22 family. In terms of assembly, interacts with PEX4.

The protein resides in the peroxisome membrane. Functionally, involved in peroxisome biogenesis. The sequence is that of Peroxisome assembly protein 22 (PEX22) from Komagataella pastoris (Yeast).